We begin with the raw amino-acid sequence, 468 residues long: Ribulose bisphosphate carboxylase large chain (468 aa).

Lys-7 carries the N6,N6,N6-trimethyllysine modification. The substrate site is built by Asn-116 and Thr-166. Residue Lys-168 is the Proton acceptor of the active site. Lys-170 serves as a coordination point for substrate. Residues Lys-194, Asp-196, and Glu-197 each contribute to the Mg(2+) site. Lys-194 carries the N6-carboxylysine modification. The active-site Proton acceptor is the His-287. Substrate is bound by residues Arg-288, His-320, and Ser-372.

This sequence belongs to the RuBisCO large chain family. Type I subfamily. Heterohexadecamer of 8 large chains and 8 small chains. Mg(2+) is required as a cofactor.

It localises to the plastid. Its subcellular location is the chloroplast. The enzyme catalyses 2 (2R)-3-phosphoglycerate + 2 H(+) = D-ribulose 1,5-bisphosphate + CO2 + H2O. The catalysed reaction is D-ribulose 1,5-bisphosphate + O2 = 2-phosphoglycolate + (2R)-3-phosphoglycerate + 2 H(+). Its function is as follows. RuBisCO catalyzes two reactions: the carboxylation of D-ribulose 1,5-bisphosphate, the primary event in carbon dioxide fixation, as well as the oxidative fragmentation of the pentose substrate in the photorespiration process. Both reactions occur simultaneously and in competition at the same active site. The protein is Ribulose bisphosphate carboxylase large chain of Couroupita guianensis (Cannonball tree).